Consider the following 577-residue polypeptide: Moesin (577 aa).

The 294-residue stretch at 2–295 (PKTINVRVTT…GNHELYMRRR (294 aa)) folds into the FERM domain. Ser74 carries the post-translational modification Phosphoserine. Residue Lys79 is modified to N6-acetyllysine. An N6-succinyllysine modification is found at Lys83. Positions 115–120 (IYCPPE) match the [IL]-x-C-x-x-[DE] motif motif. Tyr116 carries the post-translational modification Phosphotyrosine. The residue at position 117 (Cys117) is an S-nitrosocysteine. An N6-acetyllysine mark is found at Lys139 and Lys165. Positions 376 to 414 (EQERKRAQSEAEKLAKERQEAEEAKEALLKASRDQKKTQ) are enriched in basic and acidic residues. Disordered regions lie at residues 376–415 (EQER…KTQE) and 434–518 (ARQK…NERV). A Phosphoserine modification is found at Ser407. A compositionally biased stretch (acidic residues) spans 476 to 487 (AENDQDEQDENG). Over residues 492-518 (ADLRADAMAKDRSEEERTTEAEKNERV) the composition is skewed to basic and acidic residues. Ser527 carries the phosphoserine modification. Thr558 carries the phosphothreonine; by ROCK2 and STK10 modification.

In terms of assembly, binds NHERF1. In resting T-cells, part of a PAG1-NHERF1-MSN complex which is disrupted upon TCR activation. Interacts with PPP1R16B. Interacts with PDZD8. Interacts with SELPLG and SYK; mediates the activation of SYK by SELPLG. Interacts with PDPN (via cytoplasmic domain); activates RHOA and promotes epithelial-mesenchymal transition. Interacts with SPN/CD43 cytoplasmic tail, CD44 and ICAM2. Post-translationally, phosphorylation on Thr-558 is crucial for the formation of microvilli-like structures. Phosphorylation by ROCK2 suppresses the head-to-tail association of the N-terminal and C-terminal halves resulting in an opened conformation which is capable of actin and membrane-binding. Phosphorylation on Thr-558 by STK10 negatively regulates lymphocyte migration and polarization. In terms of processing, S-nitrosylation of Cys-117 is induced by interferon-gamma and oxidatively-modified low-densitity lipoprotein (LDL(ox)) implicating the iNOS-S100A8/9 transnitrosylase complex.

The protein resides in the cell membrane. The protein localises to the cytoplasm. It is found in the cytoskeleton. It localises to the apical cell membrane. Its subcellular location is the cell projection. The protein resides in the microvillus membrane. The protein localises to the microvillus. Its activity is regulated as follows. A head-to-tail association, of the N-terminal and C-terminal halves results in a closed conformation (inactive form) which is incapable of actin or membrane-binding. Probably involved in connections of major cytoskeletal structures to the plasma membrane. Plays a role in regulating the proliferation, migration, and adhesion of human lymphoid cells and participates in immunologic synapse formation. In Sus scrofa (Pig), this protein is Moesin.